A 309-amino-acid polypeptide reads, in one-letter code: MYAALIESVVKILQKAEFSVADLAETKPRCFDIVARKDDVVLLIKVLYNVDSLKPEAAEEMKKLTKILQASPIVIGERFKFDFLERGVVYTRYGLPVINLATFYDFIVEGIYPYVYSAPGGYYVKLDSERIREARERLGLSVGDMAKMLGVSRRTVKKYEEGTDTTLSTAAKIEEIIGTFAIKEIDLLNFVEADISEEEEVEGEEGEIIEQLRVIGLSVYPVRQAPFDAVSQAKEDQILTGFKQVREIEKRARLLGRISEAIDAEAAYITDKACKKKVESVVFVLKEELYSVSSAKDFISLLKEKSCEE.

The region spanning 131–185 is the HTH cro/C1-type domain; sequence IREARERLGLSVGDMAKMLGVSRRTVKKYEEGTDTTLSTAAKIEEIIGTFAIKEI. Residues 142–161 constitute a DNA-binding region (H-T-H motif); that stretch reads VGDMAKMLGVSRRTVKKYEE.

The protein is Putative HTH-type transcriptional regulatory protein AF_1787 of Archaeoglobus fulgidus (strain ATCC 49558 / DSM 4304 / JCM 9628 / NBRC 100126 / VC-16).